Here is a 259-residue protein sequence, read N- to C-terminus: Imidazole glycerol phosphate synthase subunit HisF (259 aa).

Catalysis depends on residues Asp11 and Asp130.

This sequence belongs to the HisA/HisF family. Heterodimer of HisH and HisF.

The protein resides in the cytoplasm. The catalysed reaction is 5-[(5-phospho-1-deoxy-D-ribulos-1-ylimino)methylamino]-1-(5-phospho-beta-D-ribosyl)imidazole-4-carboxamide + L-glutamine = D-erythro-1-(imidazol-4-yl)glycerol 3-phosphate + 5-amino-1-(5-phospho-beta-D-ribosyl)imidazole-4-carboxamide + L-glutamate + H(+). The protein operates within amino-acid biosynthesis; L-histidine biosynthesis; L-histidine from 5-phospho-alpha-D-ribose 1-diphosphate: step 5/9. Its function is as follows. IGPS catalyzes the conversion of PRFAR and glutamine to IGP, AICAR and glutamate. The HisF subunit catalyzes the cyclization activity that produces IGP and AICAR from PRFAR using the ammonia provided by the HisH subunit. This Variovorax paradoxus (strain S110) protein is Imidazole glycerol phosphate synthase subunit HisF.